Consider the following 371-residue polypeptide: Alanine racemase (371 aa).

Catalysis depends on Lys-35, which acts as the Proton acceptor; specific for D-alanine. Lys-35 bears the N6-(pyridoxal phosphate)lysine mark. Arg-130 provides a ligand contact to substrate. Tyr-256 (proton acceptor; specific for L-alanine) is an active-site residue. Met-304 contacts substrate.

It belongs to the alanine racemase family. Requires pyridoxal 5'-phosphate as cofactor.

It carries out the reaction L-alanine = D-alanine. It participates in amino-acid biosynthesis; D-alanine biosynthesis; D-alanine from L-alanine: step 1/1. Its function is as follows. Catalyzes the interconversion of L-alanine and D-alanine. May also act on other amino acids. The chain is Alanine racemase (alr) from Verminephrobacter eiseniae (strain EF01-2).